Reading from the N-terminus, the 547-residue chain is Phosphomethylpyrimidine synthase (547 aa).

Substrate is bound by residues asparagine 146, methionine 175, tyrosine 204, histidine 240, 260-262 (SRG), 301-304 (DGLR), and glutamate 340. Histidine 344 is a Zn(2+) binding site. Position 367 (tyrosine 367) interacts with substrate. Residue histidine 408 coordinates Zn(2+). Cysteine 488, cysteine 491, and cysteine 496 together coordinate [4Fe-4S] cluster.

The protein belongs to the ThiC family. [4Fe-4S] cluster serves as cofactor.

The enzyme catalyses 5-amino-1-(5-phospho-beta-D-ribosyl)imidazole + S-adenosyl-L-methionine = 4-amino-2-methyl-5-(phosphooxymethyl)pyrimidine + CO + 5'-deoxyadenosine + formate + L-methionine + 3 H(+). It participates in cofactor biosynthesis; thiamine diphosphate biosynthesis. Its function is as follows. Catalyzes the synthesis of the hydroxymethylpyrimidine phosphate (HMP-P) moiety of thiamine from aminoimidazole ribotide (AIR) in a radical S-adenosyl-L-methionine (SAM)-dependent reaction. In Mycobacterium bovis (strain ATCC BAA-935 / AF2122/97), this protein is Phosphomethylpyrimidine synthase.